The following is a 355-amino-acid chain: MALRLLRLVPASASARGLAAGAQRVGRIHTSVHCKLRYGLLASILGDKTTKKLHEYSRVITVDGNICSGKNKLARDIAEQLGMKHYPEAGIQYSSSTTGDGRPLDIEFSGSCSLEKFYDNPKSNDGNSYRLQSWLYASRLLQYSDALEHLLSTGQGVVLERSIYSDFVFLEAMYNQGFIRKQCVDHYNEIKRLTLPEYLPPHAVIYIDVPVSEIQSRIQKKGDPHEMKVTSAYLQDIEDAYKKTFLPKMSEICEVLVYSSWEAEDSTKVVEDIEYLNYNKGPWLKQDDRTFHNLRMLVQDKREVLNYTTVPVYLPEITIGAHQGSRIYDSFRELPGRKYAPGYNADVGDKWIWLK.

A mitochondrion-targeting transit peptide spans methionine 1–lysine 35. The residue at position 122 (lysine 122) is an N6-acetyllysine; alternate. At lysine 122 the chain carries N6-succinyllysine; alternate. Phosphoserine; by PINK1 is present on serine 250. Lysine 285 bears the N6-succinyllysine mark.

The protein belongs to the complex I NDUFA10 subunit family. In terms of assembly, complex I is composed of 45 different subunits. This a component of the hydrophobic protein fraction. FAD is required as a cofactor. In terms of processing, phosphorylation at Ser-250 by PINK1 is required for the binding and/or reduction of the complex I substrate ubiquinone. As to expression, expressed in the head and flagellum of epididymal sperm but not in testicular sperm (at protein level).

The protein localises to the mitochondrion matrix. In terms of biological role, accessory subunit of the mitochondrial membrane respiratory chain NADH dehydrogenase (Complex I), that is believed not to be involved in catalysis. Complex I functions in the transfer of electrons from NADH to the respiratory chain. The immediate electron acceptor for the enzyme is believed to be ubiquinone. The chain is NADH dehydrogenase [ubiquinone] 1 alpha subcomplex subunit 10, mitochondrial (Ndufa10) from Rattus norvegicus (Rat).